The primary structure comprises 133 residues: Small ribosomal subunit protein uS8 (133 aa).

The protein belongs to the universal ribosomal protein uS8 family. Part of the 30S ribosomal subunit. Contacts proteins S5 and S12.

One of the primary rRNA binding proteins, it binds directly to 16S rRNA central domain where it helps coordinate assembly of the platform of the 30S subunit. The sequence is that of Small ribosomal subunit protein uS8 from Prochlorococcus marinus (strain MIT 9515).